Here is a 35-residue protein sequence, read N- to C-terminus: Conotoxin M11.2 (35 aa).

Disulfide bonds link C2–C16, C9–C21, C15–C26, and C20–C33.

Belongs to the conotoxin I1 superfamily. As to expression, expressed by the venom duct.

The protein localises to the secreted. The polypeptide is Conotoxin M11.2 (Conus magus (Magical cone)).